A 215-amino-acid polypeptide reads, in one-letter code: Redox-sensing transcriptional repressor Rex (215 aa).

The H-T-H motif DNA-binding region spans 18–57 (LYYRFLKNLHASGKQRVSSAELSEAVKVDPATIRRDFSYF). 92-97 (GVGNLG) contacts NAD(+).

This sequence belongs to the transcriptional regulatory Rex family. Homodimer.

It localises to the cytoplasm. Modulates transcription in response to changes in cellular NADH/NAD(+) redox state. The sequence is that of Redox-sensing transcriptional repressor Rex from Geobacillus sp. (strain WCH70).